The chain runs to 197 residues: Elongation factor Ts (197 aa).

The tract at residues 81–84 (TDFV) is involved in Mg(2+) ion dislocation from EF-Tu.

The protein belongs to the EF-Ts family.

It is found in the cytoplasm. Functionally, associates with the EF-Tu.GDP complex and induces the exchange of GDP to GTP. It remains bound to the aminoacyl-tRNA.EF-Tu.GTP complex up to the GTP hydrolysis stage on the ribosome. This is Elongation factor Ts from Persephonella marina (strain DSM 14350 / EX-H1).